The sequence spans 657 residues: MSDHKESTGAIALTLPDRSVRNVAMGSTGYDVALSIGRKLAQDALAIKLNGVVCDLNTLINSDAAIEIITFTSPEGPEIFWHSSSHLMAQAIEELFAGSKFGAGPAIEQGFYYDVSSEHRFREEDLRAIEARMLEISKRDSSVQRQEMSREEAIAFFTSVRNDPYKVEILTETLKNVERVSLYHQGDFTDLCTGPHLPSTGKIKAVLLTNISASYWRGDSNREQMQRIYGITFPSEKLLKEHVARIEEAKRRDHRKLGAELELFLLSPEVGSGLPMWLPKGAIIRSELESFLREEQRKRGYVPVYTPHIGNIELYKRSGHYPYYSDSQFPPLTYHDEDGKQEQYLLKPMNCPHHHLIYSSKMRSYRDLPLRFTEFGTVYRHEQSGELNGLARARGFTQDDSHIYCRPDQLVDEICSAIELTQFVFKTLGFAEVQTRLSLHDPANQAKYGGTAEVWEQAEKDVQEAAERMGVDYFIGIGEASFYGPKIDFIVRDAIGRKWQLGTVQVDYVMPERFDLTYVGSDGQKHRPVVIHRAPFGSMERFIGLLIEHTAGNFPLWLAPVQVAVLPIAEENHDYATTVYRRLLAAGIRAELDTRSEKINRKIRDAEMSKTPCMLVIGQKEQANGEVSLRRHRQGDAGRFATDELIETLKQEIANRQ.

A TGS domain is found at 1–70 (MSDHKESTGA…NSDAAIEIIT (70 aa)). The tract at residues 253-555 (DHRKLGAELE…LIEHTAGNFP (303 aa)) is catalytic. 3 residues coordinate Zn(2+): Cys-351, His-402, and His-532.

Belongs to the class-II aminoacyl-tRNA synthetase family. Homodimer. It depends on Zn(2+) as a cofactor.

It localises to the cytoplasm. It catalyses the reaction tRNA(Thr) + L-threonine + ATP = L-threonyl-tRNA(Thr) + AMP + diphosphate + H(+). Functionally, catalyzes the attachment of threonine to tRNA(Thr) in a two-step reaction: L-threonine is first activated by ATP to form Thr-AMP and then transferred to the acceptor end of tRNA(Thr). Also edits incorrectly charged L-seryl-tRNA(Thr). The sequence is that of Threonine--tRNA ligase from Chlorobium chlorochromatii (strain CaD3).